The chain runs to 444 residues: Deoxyguanosinetriphosphate triphosphohydrolase-like protein (444 aa).

The 194-residue stretch at 66–259 (RLTHSLEAAQ…MELADDIAYG (194 aa)) folds into the HD domain.

Belongs to the dGTPase family. Type 2 subfamily.

The sequence is that of Deoxyguanosinetriphosphate triphosphohydrolase-like protein from Vibrio campbellii (strain ATCC BAA-1116).